The primary structure comprises 359 residues: Lactosylceramide 4-alpha-galactosyltransferase (359 aa).

The Cytoplasmic portion of the chain corresponds to 1–30 (MGISCSHLEETMSKPPDCLLRMLRGTPRQR). The chain crosses the membrane as a helical; Signal-anchor for type II membrane protein span at residues 31-51 (VFTFFIISFKFMFLISILIYW). At 52 to 359 (HTVGAPKDQR…TTHRAMKMYL (308 aa)) the chain is on the lumenal side. The short motif at 198–200 (DTD) is the DXD motif element. N-linked (GlcNAc...) asparagine glycosylation is found at Asn209 and Asn315.

This sequence belongs to the glycosyltransferase 32 family.

The protein localises to the golgi apparatus membrane. The catalysed reaction is a beta-D-Gal-(1-&gt;4)-beta-D-Glc-(1&lt;-&gt;1)-Cer(d18:1(4E)) + UDP-alpha-D-galactose = a globoside Gb3Cer (d18:1(4E)) + UDP + H(+). The enzyme catalyses a beta-D-Gal-(1&lt;-&gt;1')-ceramide + UDP-alpha-D-galactose = alpha-D-Gal-(1-&gt;4)-beta-D-Gal-(1&lt;-&gt;1')-Cer + UDP + H(+). The protein operates within glycolipid biosynthesis. Functionally, catalyzes the transfer of galactose from UDP-alpha-D-galactose to lactosylceramide/beta-D-galactosyl-(1-&gt;4)-beta-D-glucosyl-(1&lt;-&gt;1)-ceramide(d18:1(4E)) to produce globotriaosylceramide/globoside Gb3Cer (d18:1(4E)). Also able to transfer galactose to galactosylceramide/beta-D-Gal-(1&lt;-&gt;1')-Cer. Globoside Gb3Cer is a glycosphingolipid of the globo serie, one of the major types of neutral root structures of glycosphingolipids, that constitute a significant portion of mammalian cell membranes. The protein is Lactosylceramide 4-alpha-galactosyltransferase of Mus musculus (Mouse).